A 188-amino-acid chain; its full sequence is Early nodulin-like protein 5 (188 aa).

A signal peptide spans 1–24; sequence MDSSKKIIIVMFLVTFYMFSCVSS. One can recognise a Phytocyanin domain in the interval 25–128; sequence TEFEVGGENG…GQKMIVKVME (104 aa). An intrachain disulfide couples Cys82 to Cys116. Residues 127–157 form a disordered region; the sequence is METESSTESPPPSSSSSSSSSSSLPASTPKA. The span at 129 to 155 shows a compositional bias: low complexity; sequence TESSTESPPPSSSSSSSSSSSLPASTP. Ser170 is lipidated: GPI-anchor amidated serine. Residues 171 to 188 constitute a propeptide, removed in mature form; it reads SSGFVVSAVLIVSVFGLV.

This sequence belongs to the early nodulin-like (ENODL) family. Mostly expressed in leaves and flowers, and, to a lower extent, in stems.

Its subcellular location is the cell membrane. May act as a carbohydrate transporter. Mainly required for reproductive functions. This Arabidopsis thaliana (Mouse-ear cress) protein is Early nodulin-like protein 5.